We begin with the raw amino-acid sequence, 287 residues long: MSDNTPWFEGIRFPMVCFSPEILREVRDKFLVKDEDTITVTYPKSGTNWLNEIVCLILSKGDPKLVQSVPNWDRSPWIEFTGGYELVKGQKDPRVYTSHLPLHLFPKSFFSSKAKVIYCIRNPRDALVSGYFFLSKMNVTEKPETLQQYMEWFLQGNVIYGSWFEHVRGWLSMREMENVLVLSYEDLIKDTRSTVEKICQFLGKKLKPEETDLVLKYSSFQFMKENEMSNFTLLPHAYTTEGFTLLRKGTVGDWKNHFTVAQAEAFDKIYQEKMAGYPPKLFSWEEC.

Lys44–Trp49 is a binding site for 3'-phosphoadenylyl sulfate. The substrate site is built by Trp72 and Trp77. His99 functions as the Proton acceptor in the catalytic mechanism. 3'-phosphoadenylyl sulfate-binding positions include Arg121, Ser129, Tyr184, Ser218 to Met223, and Arg247 to Gly249.

The protein belongs to the sulfotransferase 1 family. Homodimer. As to expression, adrenal gland and liver.

The protein resides in the cytoplasm. It carries out the reaction an alcohol + 3'-phosphoadenylyl sulfate = an alkyl sulfate + adenosine 3',5'-bisphosphate + H(+). Sulfotransferase that utilizes 3'-phospho-5'-adenylyl sulfate (PAPS) as sulfonate donor to catalyze the sulfonation of 3-alpha-hydroxyl groups of neutral steroids. This Cavia porcellus (Guinea pig) protein is 3-alpha-hydroxysteroid sulfotransferase (STD1).